Reading from the N-terminus, the 395-residue chain is Altered inheritance of mitochondria protein 39, mitochondrial (395 aa).

Residues 156–176 (QIWSAIFGGIFGVILGYSLIY) form a helical membrane-spanning segment.

The protein belongs to the AIM39 family.

It is found in the mitochondrion membrane. This is Altered inheritance of mitochondria protein 39, mitochondrial (AIM39) from Saccharomyces cerevisiae (strain JAY291) (Baker's yeast).